A 255-amino-acid chain; its full sequence is Pimeloyl-[acyl-carrier protein] methyl ester esterase (255 aa).

In terms of domain architecture, AB hydrolase-1 spans 16–241 (LVLLHGWGMN…QSSHAPFMTE (226 aa)). Substrate-binding positions include Trp-22, 82–83 (SL), and 143–147 (FMALQ). Ser-82 acts as the Nucleophile in catalysis. Residues Asp-207 and His-235 contribute to the active site. His-235 lines the substrate pocket.

The protein belongs to the AB hydrolase superfamily. Carboxylesterase BioH family. Monomer.

Its subcellular location is the cytoplasm. It carries out the reaction 6-carboxyhexanoyl-[ACP] methyl ester + H2O = 6-carboxyhexanoyl-[ACP] + methanol + H(+). It functions in the pathway cofactor biosynthesis; biotin biosynthesis. Its function is as follows. The physiological role of BioH is to remove the methyl group introduced by BioC when the pimeloyl moiety is complete. It allows to synthesize pimeloyl-ACP via the fatty acid synthetic pathway through the hydrolysis of the ester bonds of pimeloyl-ACP esters. This Vibrio parahaemolyticus serotype O3:K6 (strain RIMD 2210633) protein is Pimeloyl-[acyl-carrier protein] methyl ester esterase.